An 883-amino-acid polypeptide reads, in one-letter code: DNA mismatch repair protein MutS (883 aa).

G633–S640 contacts ATP.

This sequence belongs to the DNA mismatch repair MutS family.

Its function is as follows. This protein is involved in the repair of mismatches in DNA. It is possible that it carries out the mismatch recognition step. This protein has a weak ATPase activity. This chain is DNA mismatch repair protein MutS, found in Bordetella pertussis (strain Tohama I / ATCC BAA-589 / NCTC 13251).